Consider the following 94-residue polypeptide: Small ribosomal subunit protein uS19 (94 aa).

It belongs to the universal ribosomal protein uS19 family.

In terms of biological role, protein S19 forms a complex with S13 that binds strongly to the 16S ribosomal RNA. The polypeptide is Small ribosomal subunit protein uS19 (Anaplasma phagocytophilum (strain HZ)).